Consider the following 96-residue polypeptide: Co-chaperonin GroES (96 aa).

Belongs to the GroES chaperonin family. In terms of assembly, heptamer of 7 subunits arranged in a ring. Interacts with the chaperonin GroEL.

The protein resides in the cytoplasm. In terms of biological role, together with the chaperonin GroEL, plays an essential role in assisting protein folding. The GroEL-GroES system forms a nano-cage that allows encapsulation of the non-native substrate proteins and provides a physical environment optimized to promote and accelerate protein folding. GroES binds to the apical surface of the GroEL ring, thereby capping the opening of the GroEL channel. The protein is Co-chaperonin GroES of Paraburkholderia phytofirmans (strain DSM 17436 / LMG 22146 / PsJN) (Burkholderia phytofirmans).